Reading from the N-terminus, the 1377-residue chain is DNA-directed RNA polymerase subunit beta (1377 aa).

This sequence belongs to the RNA polymerase beta chain family. In terms of assembly, the RNAP catalytic core consists of 2 alpha, 1 beta, 1 beta' and 1 omega subunit. When a sigma factor is associated with the core the holoenzyme is formed, which can initiate transcription.

The enzyme catalyses RNA(n) + a ribonucleoside 5'-triphosphate = RNA(n+1) + diphosphate. Its function is as follows. DNA-dependent RNA polymerase catalyzes the transcription of DNA into RNA using the four ribonucleoside triphosphates as substrates. The polypeptide is DNA-directed RNA polymerase subunit beta (Aromatoleum aromaticum (strain DSM 19018 / LMG 30748 / EbN1) (Azoarcus sp. (strain EbN1))).